A 1404-amino-acid chain; its full sequence is Microtubule organization protein AKNA (1404 aa).

Disordered stretches follow at residues 1 to 304 (MASS…VSPL) and 317 to 382 (QHKQ…RPLI). At serine 51 the chain carries Phosphoserine. Positions 70–91 (WDPDMQDSEESSGEETEADDAS) are enriched in acidic residues. Residues 185–203 (KSWSSGTVSLRQPSDSLGS) are compositionally biased toward polar residues. Position 302 is a phosphoserine (serine 302). 2 positions are modified to phosphoserine: serine 485 and serine 520. The interval 494–549 (AEWWPDPAQDPQASEATGWPFPRTDLSPSSSPGVATPGRLPQSQGIATDQPSTGQT) is disordered. Residues 534–549 (PQSQGIATDQPSTGQT) are compositionally biased toward polar residues. Serine 617 is modified (phosphoserine). The segment covering 645-659 (MDQTQRETEPCRPDL) has biased composition (basic and acidic residues). A disordered region spans residues 645 to 708 (MDQTQRETEP…TSPGSSCTLP (64 aa)). Polar residues-rich tracts occupy residues 660–674 (QDST…QSAH) and 686–707 (DGQT…SCTL). Phosphoserine occurs at positions 750 and 753. The segment at 754 to 787 (LPEALRDEDEDDLEEEEEEQDHQGPLEVDSPATA) is PEST. Disordered regions lie at residues 755 to 1038 (PEAL…STAN) and 1085 to 1185 (HSTQ…RERV). The segment covering 759-773 (RDEDEDDLEEEEEEQ) has biased composition (acidic residues). Residues 803-813 (TQAEESHRDAT) show a composition bias toward basic and acidic residues. 2 positions are modified to phosphoserine: serine 831 and serine 860. The tract at residues 885–906 (HTEEPWMVSPETDSGFVGSETS) is PEST. Composition is skewed to polar residues over residues 903–914 (SETSIVSPFTQT), 921–933 (HVST…QHLT), and 963–974 (SRTQQHFSSLSS). Residue serine 971 is modified to Phosphoserine. The span at 1015–1029 (TSPDSAPAPTAASTP) shows a compositional bias: low complexity. Polar residues predominate over residues 1085-1098 (HSTQTQEKLGSSPS). A DNA-binding region (a.T hook) is located at residues 1088–1096 (QTQEKLGSS). Residues serine 1144 and serine 1145 each carry the phosphoserine modification. Positions 1155–1167 (SSEKSRTFEEHPE) are enriched in basic and acidic residues. At serine 1200 the chain carries Phosphoserine. Disordered stretches follow at residues 1208–1235 (SGTP…TTRG) and 1253–1286 (SAEA…QTGS). Residues 1221-1235 (TQDTGSAVSRDTTRG) are compositionally biased toward polar residues. Phosphoserine is present on residues serine 1339, serine 1352, and serine 1389.

It belongs to the AKNA family. In terms of assembly, interacts with DCTN1. Interacts with MAPRE1/EB1. Interacts with ODF2. Interacts with CAMSAP3. In terms of processing, phosphorylated; phosphorylation regulates dissociation from and reassembly at the centrosome. Expressed in neural stem cells isolated at the peak of subventricular zone (SVZ): localizes at the subdistal appendages of the mother centriole in specific subtypes of neural stem cells and in almost all basal progenitors.

It is found in the cytoplasm. It localises to the cytoskeleton. The protein resides in the microtubule organizing center. Its subcellular location is the centrosome. The protein localises to the centriole. It is found in the nucleus. Centrosomal protein that plays a key role in cell delamination by regulating microtubule organization. Required for the delamination and retention of neural stem cells from the subventricular zone during neurogenesis. Also regulates the epithelial-to-mesenchymal transition in other epithelial cells. Acts by increasing centrosomal microtubule nucleation and recruiting nucleation factors and minus-end stabilizers, thereby destabilizing microtubules at the adherens junctions and mediating constriction of the apical endfoot. In addition, may also act as a transcription factor that specifically activates the expression of the CD40 receptor and its ligand CD40L/CD154, two cell surface molecules on lymphocytes that are critical for antigen-dependent-B-cell development. Binds to A/T-rich promoters. It is unclear how it can both act as a microtubule organizer and as a transcription factor; additional evidences are required to reconcile these two apparently contradictory functions. The sequence is that of Microtubule organization protein AKNA from Mus musculus (Mouse).